Consider the following 199-residue polypeptide: Prolactin (199 aa).

Cysteine 4 and cysteine 11 are disulfide-bonded. Phosphoserine occurs at positions 26, 34, and 90. Disulfide bonds link cysteine 58–cysteine 174 and cysteine 191–cysteine 199.

The protein belongs to the somatotropin/prolactin family. In terms of assembly, interacts with PRLR.

It is found in the secreted. Prolactin acts primarily on the mammary gland by promoting lactation. The polypeptide is Prolactin (PRL) (Balaenoptera borealis (Sei whale)).